A 451-amino-acid polypeptide reads, in one-letter code: Exodeoxyribonuclease 7 large subunit (451 aa).

The protein belongs to the XseA family. In terms of assembly, heterooligomer composed of large and small subunits.

Its subcellular location is the cytoplasm. It catalyses the reaction Exonucleolytic cleavage in either 5'- to 3'- or 3'- to 5'-direction to yield nucleoside 5'-phosphates.. In terms of biological role, bidirectionally degrades single-stranded DNA into large acid-insoluble oligonucleotides, which are then degraded further into small acid-soluble oligonucleotides. This is Exodeoxyribonuclease 7 large subunit from Neisseria meningitidis serogroup A / serotype 4A (strain DSM 15465 / Z2491).